A 478-amino-acid polypeptide reads, in one-letter code: Glycogen synthase (478 aa).

Lys15 contributes to the ADP-alpha-D-glucose binding site.

This sequence belongs to the glycosyltransferase 1 family. Bacterial/plant glycogen synthase subfamily.

The enzyme catalyses [(1-&gt;4)-alpha-D-glucosyl](n) + ADP-alpha-D-glucose = [(1-&gt;4)-alpha-D-glucosyl](n+1) + ADP + H(+). It functions in the pathway glycan biosynthesis; glycogen biosynthesis. Functionally, synthesizes alpha-1,4-glucan chains using ADP-glucose. This Actinobacillus pleuropneumoniae serotype 5b (strain L20) protein is Glycogen synthase.